The primary structure comprises 359 residues: Ferredoxin--NADP reductase (359 aa).

7 residues coordinate FAD: Asp48, Gln56, Tyr61, Ala101, Phe139, Asp304, and Ser345. Residues 340–359 (VHTHTSNDTNLQSRLHAAAE) are disordered. The segment covering 341-352 (HTHTSNDTNLQS) has biased composition (polar residues).

It belongs to the ferredoxin--NADP reductase type 2 family. In terms of assembly, homodimer. Requires FAD as cofactor.

The catalysed reaction is 2 reduced [2Fe-2S]-[ferredoxin] + NADP(+) + H(+) = 2 oxidized [2Fe-2S]-[ferredoxin] + NADPH. The protein is Ferredoxin--NADP reductase of Ralstonia nicotianae (strain ATCC BAA-1114 / GMI1000) (Ralstonia solanacearum).